We begin with the raw amino-acid sequence, 608 residues long: DNA ligase (608 aa).

Residue glutamate 266 coordinates ATP. The N6-AMP-lysine intermediate role is filled by lysine 268. ATP contacts are provided by arginine 273, arginine 288, glutamate 318, phenylalanine 358, arginine 435, and lysine 441.

This sequence belongs to the ATP-dependent DNA ligase family. Requires Mg(2+) as cofactor. It depends on Mn(2+) as a cofactor.

The catalysed reaction is ATP + (deoxyribonucleotide)n-3'-hydroxyl + 5'-phospho-(deoxyribonucleotide)m = (deoxyribonucleotide)n+m + AMP + diphosphate.. The enzyme catalyses ADP + (deoxyribonucleotide)n-3'-hydroxyl + 5'-phospho-(deoxyribonucleotide)m = (deoxyribonucleotide)n+m + AMP + phosphate.. It carries out the reaction GTP + (deoxyribonucleotide)n-3'-hydroxyl + 5'-phospho-(deoxyribonucleotide)m = (deoxyribonucleotide)n+m + GMP + diphosphate.. In terms of biological role, DNA ligase that seals nicks in double-stranded DNA during DNA replication, DNA recombination and DNA repair. Can use ATP, ADP and GTP, but not CTP, TTP or NAD(+). The polypeptide is DNA ligase (Hyperthermus butylicus (strain DSM 5456 / JCM 9403 / PLM1-5)).